Consider the following 683-residue polypeptide: Multidrug resistance protein MdtO (683 aa).

9 helical membrane-spanning segments follow: residues 43–63, 75–95, 100–120, 125–145, 158–178, 402–422, 426–446, 457–477, and 483–503; these read VILISMTFEIPFVALSLAVLF, FVAILFVVATVLEIGSLFLIY, GEPLIRLIIAGPILMGCMFLM, LGLVFFAVAIVAIYGQTFPAM, WCIVVGLYPTLLMTLIGVLWF, FGGAFCGAILALLFTLLVMPW, IVELLFVLAPIFLLGAWIATS, MVVTFALATLENVFGPVYDLV, and ALGIIIGTVVSAVIYTFVWPE.

It belongs to the MdtO family. In terms of assembly, could be part of a tripartite efflux system composed of MdtN, MdtO and MdtP.

It localises to the cell inner membrane. Its function is as follows. Could be involved in resistance to puromycin, acriflavine and tetraphenylarsonium chloride. The polypeptide is Multidrug resistance protein MdtO (mdtO) (Escherichia coli O157:H7).